A 228-amino-acid chain; its full sequence is Expansin-B13 (228 aa).

Positions 1–22 (MASSSLLLASVVVAAMVSAVSC) are cleaved as a signal peptide. N32 carries an N-linked (GlcNAc...) asparagine glycan. The Expansin-like EG45 domain maps to 61–172 (SGACGYKDVD…KEKGSEEWKA (112 aa)). Disulfide bonds link C64–C92 and C100–C106. The Expansin-like CBD domain maps to 142–223 (GKDEELLKYV…GWKADSVYKS (82 aa)).

It belongs to the expansin family. Expansin B subfamily.

The protein localises to the secreted. It localises to the cell wall. It is found in the membrane. In terms of biological role, may cause loosening and extension of plant cell walls by disrupting non-covalent bonding between cellulose microfibrils and matrix glucans. No enzymatic activity has been found. May be required for rapid internodal elongation in deepwater rice during submergence. The chain is Expansin-B13 (EXPB13) from Oryza sativa subsp. japonica (Rice).